The chain runs to 403 residues: Pyruvate, phosphate dikinase regulatory protein 1, chloroplastic (403 aa).

The N-terminal 86 residues, Met-1–Glu-86, are a transit peptide targeting the chloroplast. The tract at residues Met-1 to Ser-108 is disordered. Composition is skewed to low complexity over residues Ser-17–Pro-26, Ser-69–Gly-80, and Ser-87–Ser-108. Gly-269–Thr-276 is a binding site for ADP.

Belongs to the pyruvate, phosphate/water dikinase regulatory protein family. PDRP subfamily. As to quaternary structure, interacts with PPDK1. Expressed in green tissues.

Its subcellular location is the plastid. It localises to the chloroplast stroma. It carries out the reaction N(tele)-phospho-L-histidyl/L-threonyl-[pyruvate, phosphate dikinase] + ADP = N(tele)-phospho-L-histidyl/O-phospho-L-threonyl-[pyruvate, phosphate dikinase] + AMP + H(+). It catalyses the reaction N(tele)-phospho-L-histidyl/O-phospho-L-threonyl-[pyruvate, phosphate dikinase] + phosphate + H(+) = N(tele)-phospho-L-histidyl/L-threonyl-[pyruvate, phosphate dikinase] + diphosphate. Its activity is regulated as follows. Regulated by light/dark exposure. Its function is as follows. Bifunctional serine/threonine kinase and phosphorylase involved in the dark/light-mediated regulation of PPDK by catalyzing its phosphorylation/dephosphorylation. Dark/light-induced changes in stromal concentrations of the competing ADP and Pi substrates govern the direction of the reaction. In the dark, phosphorylates the catalytic intermediate of PPDK (PPDK-HisP), inactivating it. Light exposure induces the phosphorolysis reaction that reactivates PPDK. Unlike the kinase function which can utilize either Thr or Ser as target, the phosphorylase function has a strict substrate requirement for threonyl phosphate. In Arabidopsis thaliana (Mouse-ear cress), this protein is Pyruvate, phosphate dikinase regulatory protein 1, chloroplastic (RP1).